Here is a 123-residue protein sequence, read N- to C-terminus: Large ribosomal subunit protein bL12 (123 aa).

The protein belongs to the bacterial ribosomal protein bL12 family. As to quaternary structure, homodimer. Part of the ribosomal stalk of the 50S ribosomal subunit. Forms a multimeric L10(L12)X complex, where L10 forms an elongated spine to which 2 to 4 L12 dimers bind in a sequential fashion. Binds GTP-bound translation factors.

In terms of biological role, forms part of the ribosomal stalk which helps the ribosome interact with GTP-bound translation factors. Is thus essential for accurate translation. The sequence is that of Large ribosomal subunit protein bL12 from Dehalococcoides mccartyi (strain ATCC BAA-2100 / JCM 16839 / KCTC 5957 / BAV1).